Here is a 614-residue protein sequence, read N- to C-terminus: Putative binding protein BMEII0691 (614 aa).

The first 28 residues, 1-28 (MNRFIAFFRSVFLIGLVATAFGALPARA), serve as a signal peptide directing secretion.

Belongs to the bacterial solute-binding protein 5 family.

It localises to the periplasm. The protein is Putative binding protein BMEII0691 of Brucella melitensis biotype 1 (strain ATCC 23456 / CCUG 17765 / NCTC 10094 / 16M).